The following is a 211-amino-acid chain: Thymidylate kinase (211 aa).

An ATP-binding site is contributed by 10-17 (GLDGSGKT).

It belongs to the thymidylate kinase family.

The enzyme catalyses dTMP + ATP = dTDP + ADP. In terms of biological role, phosphorylation of dTMP to form dTDP in both de novo and salvage pathways of dTTP synthesis. The chain is Thymidylate kinase from Blochmanniella floridana.